The sequence spans 100 residues: Urease subunit gamma (100 aa).

It belongs to the urease gamma subunit family. In terms of assembly, heterotrimer of UreA (gamma), UreB (beta) and UreC (alpha) subunits. Three heterotrimers associate to form the active enzyme.

Its subcellular location is the cytoplasm. The catalysed reaction is urea + 2 H2O + H(+) = hydrogencarbonate + 2 NH4(+). It functions in the pathway nitrogen metabolism; urea degradation; CO(2) and NH(3) from urea (urease route): step 1/1. This is Urease subunit gamma from Pseudomonas putida (strain W619).